The chain runs to 110 residues: UPF0060 membrane protein Bamb_1160 (110 aa).

Transmembrane regions (helical) follow at residues 9–29 (ALFA…WLVL), 34–54 (PVWL…LLTL), 66–86 (YGGV…GVAL), and 88–108 (RWDA…ALQP).

The protein belongs to the UPF0060 family.

Its subcellular location is the cell inner membrane. This chain is UPF0060 membrane protein Bamb_1160, found in Burkholderia ambifaria (strain ATCC BAA-244 / DSM 16087 / CCUG 44356 / LMG 19182 / AMMD) (Burkholderia cepacia (strain AMMD)).